The sequence spans 148 residues: 3-hydroxyacyl-[acyl-carrier-protein] dehydratase FabZ (148 aa).

The active site involves histidine 48.

This sequence belongs to the thioester dehydratase family. FabZ subfamily.

The protein localises to the cytoplasm. The catalysed reaction is a (3R)-hydroxyacyl-[ACP] = a (2E)-enoyl-[ACP] + H2O. Involved in unsaturated fatty acids biosynthesis. Catalyzes the dehydration of short chain beta-hydroxyacyl-ACPs and long chain saturated and unsaturated beta-hydroxyacyl-ACPs. In Campylobacter concisus (strain 13826), this protein is 3-hydroxyacyl-[acyl-carrier-protein] dehydratase FabZ.